Consider the following 124-residue polypeptide: MDTMGRHVISELWGCDFDKLNDIEFIEKTFVDAALKSGAEIREVAFHKFAPQGVSGVVIISESHLTIHTFPEHGYASIDVYTCGHLDPTIAADYIADKLGAQTRETIELPRGMRPIEVKKAQAL.

Ser-63 acts as the Schiff-base intermediate with substrate; via pyruvic acid in catalysis. Position 63 is a pyruvic acid (Ser); by autocatalysis (Ser-63). The Proton acceptor; for processing activity role is filled by His-68. The Proton donor; for catalytic activity role is filled by Cys-83.

This sequence belongs to the prokaryotic AdoMetDC family. Type 1 subfamily. In terms of assembly, heterotetramer of two alpha and two beta chains arranged as a dimer of alpha/beta heterodimers. Requires pyruvate as cofactor. Is synthesized initially as an inactive proenzyme. Formation of the active enzyme involves a self-maturation process in which the active site pyruvoyl group is generated from an internal serine residue via an autocatalytic post-translational modification. Two non-identical subunits are generated from the proenzyme in this reaction, and the pyruvate is formed at the N-terminus of the alpha chain, which is derived from the carboxyl end of the proenzyme. The post-translation cleavage follows an unusual pathway, termed non-hydrolytic serinolysis, in which the side chain hydroxyl group of the serine supplies its oxygen atom to form the C-terminus of the beta chain, while the remainder of the serine residue undergoes an oxidative deamination to produce ammonia and the pyruvoyl group blocking the N-terminus of the alpha chain.

The enzyme catalyses S-adenosyl-L-methionine + H(+) = S-adenosyl 3-(methylsulfanyl)propylamine + CO2. The protein operates within amine and polyamine biosynthesis; S-adenosylmethioninamine biosynthesis; S-adenosylmethioninamine from S-adenosyl-L-methionine: step 1/1. Catalyzes the decarboxylation of S-adenosylmethionine to S-adenosylmethioninamine (dcAdoMet), the propylamine donor required for the synthesis of the polyamines spermine and spermidine from the diamine putrescine. In Geobacillus sp. (strain WCH70), this protein is S-adenosylmethionine decarboxylase proenzyme.